The chain runs to 535 residues: Tetrathionate hydrolase (535 aa).

A signal peptide spans 1 to 39 (MNLKILVGLFILGIIILSAMTFLNFTTIVAQDKGDQQPK). Asn50 carries an N-linked (GlcNAc...) asparagine glycan.

This sequence belongs to the tetrathionate hydrolase family. As to quaternary structure, monomer and homodimer; in equilibrium.

It localises to the cell surface. The enzyme catalyses tetrathionate + H2O = sulfur + thiosulfate + sulfate + H(+). Functionally, catalyzes the hydrolysis of tetrathionate to generate elemental sulfur, thiosulfate and sulfate. The protein is Tetrathionate hydrolase of Acidianus ambivalens (Desulfurolobus ambivalens).